Here is a 787-residue protein sequence, read N- to C-terminus: Penicillin-binding protein 1A (787 aa).

Residues 1 to 6 lie on the Cytoplasmic side of the membrane; it reads MYKSLF. A helical; Signal-anchor for type II membrane protein transmembrane segment spans residues 7 to 27; sequence LCLKIFAVLILIGCSVTAYII. Residues 28–787 lie on the Periplasmic side of the membrane; that stretch reads YHYSHDLPDY…GMLDQSQEIY (760 aa). The segment at 49–220 is transglycosylase; it reads TRIYSRDGKL…SELNPDKNYS (172 aa). Catalysis depends on glutamate 87, which acts as the Proton donor; for transglycosylase activity. Residues 398–711 form a transpeptidase region; that stretch reads DVIVVEPIKD…SNVVLPIFID (314 aa). Serine 457 (acyl-ester intermediate; for transpeptidase activity) is an active-site residue.

The protein in the N-terminal section; belongs to the glycosyltransferase 51 family. In the C-terminal section; belongs to the transpeptidase family.

Its subcellular location is the cell inner membrane. It carries out the reaction [GlcNAc-(1-&gt;4)-Mur2Ac(oyl-L-Ala-gamma-D-Glu-L-Lys-D-Ala-D-Ala)](n)-di-trans,octa-cis-undecaprenyl diphosphate + beta-D-GlcNAc-(1-&gt;4)-Mur2Ac(oyl-L-Ala-gamma-D-Glu-L-Lys-D-Ala-D-Ala)-di-trans,octa-cis-undecaprenyl diphosphate = [GlcNAc-(1-&gt;4)-Mur2Ac(oyl-L-Ala-gamma-D-Glu-L-Lys-D-Ala-D-Ala)](n+1)-di-trans,octa-cis-undecaprenyl diphosphate + di-trans,octa-cis-undecaprenyl diphosphate + H(+). The enzyme catalyses Preferential cleavage: (Ac)2-L-Lys-D-Ala-|-D-Ala. Also transpeptidation of peptidyl-alanyl moieties that are N-acyl substituents of D-alanine.. The protein operates within cell wall biogenesis; peptidoglycan biosynthesis. Functionally, cell wall formation. Synthesis of cross-linked peptidoglycan from the lipid intermediates. The enzyme has a penicillin-insensitive transglycosylase N-terminal domain (formation of linear glycan strands) and a penicillin-sensitive transpeptidase C-terminal domain (cross-linking of the peptide subunits). This chain is Penicillin-binding protein 1A (mrcA), found in Rickettsia prowazekii (strain Madrid E).